Here is a 452-residue protein sequence, read N- to C-terminus: Digeranylgeranylglycerophospholipid reductase (452 aa).

FAD contacts are provided by residues 15–16, 35–36, and 45–50; these read FA, DS, and KPCGDA. Histidine 55 is an a 2,3-bis-O-phytanyl-sn-glycerol 1-phospholipid binding site. The FAD site is built by alanine 122 and aspartate 288. Residue histidine 297 participates in a 2,3-bis-O-phytanyl-sn-glycerol 1-phospholipid binding. 300–301 contacts FAD; that stretch reads GK. An intrachain disulfide couples cysteine 310 to cysteine 335. Residue tyrosine 340 coordinates a 2,3-bis-O-phytanyl-sn-glycerol 1-phospholipid.

The protein belongs to the geranylgeranyl reductase family. Monomer. FAD serves as cofactor.

It catalyses the reaction a 2,3-bis-O-phytanyl-sn-glycerol 1-phospholipid + 8 A = a 2,3-bis-O-(geranylgeranyl)-sn-glycerol 1-phospholipid + 8 AH2. It carries out the reaction 2,3-bis-O-(phytanyl)-sn-glycerol 1-phosphate + 8 A = 2,3-bis-O-(geranylgeranyl)-sn-glycerol 1-phosphate + 8 AH2. The enzyme catalyses sn-3-O-phytanylglycerol 1-phosphate + 4 A = sn-3-O-(geranylgeranyl)glycerol 1-phosphate + 4 AH2. The catalysed reaction is phytyl diphosphate + 3 A = (2E,6E,10E)-geranylgeranyl diphosphate + 3 AH2. It participates in membrane lipid metabolism; glycerophospholipid metabolism. Is involved in the reduction of 2,3-digeranylgeranylglycerophospholipids (unsaturated archaeols) into 2,3-diphytanylglycerophospholipids (saturated archaeols) in the biosynthesis of archaeal membrane lipids. Catalyzes the formation of archaetidic acid (2,3-di-O-phytanyl-sn-glyceryl phosphate) from 2,3-di-O-geranylgeranylglyceryl phosphate (DGGGP) via the hydrogenation of each double bond of the isoprenoid chains. Is not active with NADPH or NADH as an electron donor; the physiological reducing agent is unknown. Is also active on the more upstream precursors of membrane lipid biosynthesis, catalyzing the complete reduction of 3-O-geranylgeranylglyceryl phosphate (GGGP) to 3-O-phytanylglyceryl phosphate, and the partial reduction of geranylgeranyl diphosphate (GGPP) to phytyl diphosphate, thus reducing three of four GGPP double bonds and preserving the allylic double bond (at position 2). This reaction product is a reactive prenyl donor, which can be used as a substrate by archaeal prenyltransferases such as GGGP synthases. This chain is Digeranylgeranylglycerophospholipid reductase, found in Sulfolobus acidocaldarius (strain ATCC 33909 / DSM 639 / JCM 8929 / NBRC 15157 / NCIMB 11770).